The chain runs to 1332 residues: Delta-poly-L-ornithine synthetase (1332 aa).

The L-ornithine site is built by Asp-217, Glu-221, and Thr-304. Residues Glu-221, Thr-304, Gly-306, and Thr-308 each coordinate D-ornithine. Residues Val-312 and Ser-313 each contribute to the L-ornithine site. D-ornithine is bound at residue Ser-313. In terms of domain architecture, Carrier spans 524–601 (QPQNPAEEIL…AIAALMLEQP (78 aa)). Ser-560 is subject to O-(pantetheine 4'-phosphoryl)serine. The next 6 membrane-spanning stretches (helical) occupy residues 629 to 649 (LVTIPVLISINILQWLAPFFT), 664 to 684 (AIALSLLVYVSVIMSSFVLSI), 868 to 888 (VSALIIACLFFIPIFPSFLLV), 908 to 928 (LYYFILAIPASAMMMMITAVI), 1120 to 1140 (IVLPAALAIGVGYMIVLDVID), and 1151 to 1171 (LVALTLAGLLYGVGCFLIVAL).

The protein belongs to the ATP-dependent AMP-binding enzyme family. It depends on pantetheine 4'-phosphate as a cofactor.

The protein resides in the cell membrane. The catalysed reaction is n L-ornithine + n ATP + H2O = N(5)-(L-ornithyl)-[N(5)-(L-ornithyl)]n-1 + n AMP + n diphosphate + n H(+). It catalyses the reaction n D-ornithine + n ATP + H2O = N(5)-(D-ornithyl)-[N(5)-(D-ornithyl)]n-1 + n AMP + n diphosphate + n H(+). Catalyzes the polymerization of L-ornithine, generating poly-L-ornithine composed of 7-12 amino acid units joined via isopeptide bonds between the carboxylate and the side chain amine. This polymer exhibits potent antifungal activity and thus may have a potential role in survival benefit for A.baumannii. The reaction occurs via ATP-dependent adenylation of the substrate. Can also adenylate D-ornithine with similar efficiency and thus may produce D-ornithine polymers. This is Delta-poly-L-ornithine synthetase from Acinetobacter baumannii (strain AB307-0294).